A 234-amino-acid chain; its full sequence is tRNA1(Val) (adenine(37)-N6)-methyltransferase (234 aa).

Belongs to the methyltransferase superfamily. tRNA (adenine-N(6)-)-methyltransferase family.

It is found in the cytoplasm. It catalyses the reaction adenosine(37) in tRNA1(Val) + S-adenosyl-L-methionine = N(6)-methyladenosine(37) in tRNA1(Val) + S-adenosyl-L-homocysteine + H(+). In terms of biological role, specifically methylates the adenine in position 37 of tRNA(1)(Val) (anticodon cmo5UAC). This chain is tRNA1(Val) (adenine(37)-N6)-methyltransferase, found in Aliivibrio fischeri (strain MJ11) (Vibrio fischeri).